A 390-amino-acid chain; its full sequence is S-adenosylmethionine synthase 2 (390 aa).

Glu-9 is a Mg(2+) binding site. Residue His-15 coordinates ATP. Position 43 (Glu-43) interacts with K(+). L-methionine is bound by residues Glu-56 and Gln-99. Residues 167 to 169 (DGK), 235 to 238 (SGRF), Asp-246, 252 to 253 (RK), Ala-269, Lys-273, and Lys-277 each bind ATP. Residue Asp-246 coordinates L-methionine. Lys-277 is a binding site for L-methionine.

It belongs to the AdoMet synthase family. In terms of assembly, homotetramer. It depends on Mn(2+) as a cofactor. The cofactor is Mg(2+). Requires Co(2+) as cofactor. K(+) serves as cofactor.

It localises to the cytoplasm. It carries out the reaction L-methionine + ATP + H2O = S-adenosyl-L-methionine + phosphate + diphosphate. The protein operates within amino-acid biosynthesis; S-adenosyl-L-methionine biosynthesis; S-adenosyl-L-methionine from L-methionine: step 1/1. Its function is as follows. Catalyzes the formation of S-adenosylmethionine from methionine and ATP. The reaction comprises two steps that are both catalyzed by the same enzyme: formation of S-adenosylmethionine (AdoMet) and triphosphate, and subsequent hydrolysis of the triphosphate. In Solanum tuberosum (Potato), this protein is S-adenosylmethionine synthase 2 (METK2).